Consider the following 117-residue polypeptide: uncharacterized protein (117 aa).

A helical transmembrane segment spans residues 10 to 32; the sequence is VCYLGDIAASGFLNSIATALIAV.

It is found in the membrane. This is an uncharacterized protein from Rickettsia conorii (strain ATCC VR-613 / Malish 7).